Reading from the N-terminus, the 140-residue chain is Large ribosomal subunit protein uL11 (140 aa).

Belongs to the universal ribosomal protein uL11 family. Part of the ribosomal stalk of the 50S ribosomal subunit. Interacts with L10 and the large rRNA to form the base of the stalk. L10 forms an elongated spine to which L12 dimers bind in a sequential fashion forming a multimeric L10(L12)X complex. One or more lysine residues are methylated.

Its function is as follows. Forms part of the ribosomal stalk which helps the ribosome interact with GTP-bound translation factors. The sequence is that of Large ribosomal subunit protein uL11 from Staphylococcus aureus (strain Mu3 / ATCC 700698).